A 274-amino-acid polypeptide reads, in one-letter code: Large ribosomal subunit protein uL2 (274 aa).

A disordered region spans residues 197–274 (NSDHALEKSG…SKYIIERRKK (78 aa)). Basic residues-rich tracts occupy residues 207 to 220 (KAGR…RPHN) and 244 to 274 (PRSR…RRKK).

Belongs to the universal ribosomal protein uL2 family. As to quaternary structure, part of the 50S ribosomal subunit. Forms a bridge to the 30S subunit in the 70S ribosome.

In terms of biological role, one of the primary rRNA binding proteins. Required for association of the 30S and 50S subunits to form the 70S ribosome, for tRNA binding and peptide bond formation. It has been suggested to have peptidyltransferase activity; this is somewhat controversial. Makes several contacts with the 16S rRNA in the 70S ribosome. In Porphyromonas gingivalis (strain ATCC BAA-308 / W83), this protein is Large ribosomal subunit protein uL2.